The following is a 254-amino-acid chain: Leucyl/phenylalanyl-tRNA--protein transferase (254 aa).

Belongs to the L/F-transferase family.

It is found in the cytoplasm. It catalyses the reaction N-terminal L-lysyl-[protein] + L-leucyl-tRNA(Leu) = N-terminal L-leucyl-L-lysyl-[protein] + tRNA(Leu) + H(+). The catalysed reaction is N-terminal L-arginyl-[protein] + L-leucyl-tRNA(Leu) = N-terminal L-leucyl-L-arginyl-[protein] + tRNA(Leu) + H(+). The enzyme catalyses L-phenylalanyl-tRNA(Phe) + an N-terminal L-alpha-aminoacyl-[protein] = an N-terminal L-phenylalanyl-L-alpha-aminoacyl-[protein] + tRNA(Phe). In terms of biological role, functions in the N-end rule pathway of protein degradation where it conjugates Leu, Phe and, less efficiently, Met from aminoacyl-tRNAs to the N-termini of proteins containing an N-terminal arginine or lysine. This chain is Leucyl/phenylalanyl-tRNA--protein transferase, found in Burkholderia multivorans (strain ATCC 17616 / 249).